A 250-amino-acid polypeptide reads, in one-letter code: MFQQIGAVQAKSGTDEPAHPCEKFPPERKCEAVFWKPLPRHEAREILLAARKYELAMKQPGKRTGPLGHVALEVLDYLTNLVDFGNGRLDPSISTIMEKIGRAESCMSALYPNRQRGRRPAGAADKQRLPLEPAGARPRALLGKYVRKAAPLPDDAAQARQERHDTIKAHMDSLSPADRLRETVEDRTRAEQLAGYVERAAQNRPSGPRKAARRRQQSRCSFTTPNRPRRTLPSSHPQKFGGTKGRKAFE.

2 disordered regions span residues 1 to 23 (MFQQ…PCEK) and 168 to 250 (KAHM…KAFE). 2 stretches are compositionally biased toward basic and acidic residues: residues 13-23 (GTDEPAHPCEK) and 178-190 (DRLR…RTRA). Over residues 218–237 (SRCSFTTPNRPRRTLPSSHP) the composition is skewed to polar residues.

Its function is as follows. Required for replication. It likely regulates pTAR copy number. The polypeptide is Replicating protein (repA) (Rhizobium radiobacter (Agrobacterium tumefaciens)).